The primary structure comprises 78 residues: UPF0291 protein ABC2165 (78 aa).

The segment at 56 to 78 (AKGNDVTPQKLKDSKAQKHKRLH) is disordered.

It belongs to the UPF0291 family.

It is found in the cytoplasm. This Shouchella clausii (strain KSM-K16) (Alkalihalobacillus clausii) protein is UPF0291 protein ABC2165.